The primary structure comprises 666 residues: Zinc finger protein 710 (666 aa).

Glycyl lysine isopeptide (Lys-Gly) (interchain with G-Cter in SUMO2) cross-links involve residues Lys-110 and Lys-113. The disordered stretch occupies residues 113-141; that stretch reads KAEEEEEQEVYEVSVPGDDKDPGPAEAPA. C2H2-type zinc fingers lie at residues 297–319, 325–347, and 353–375; these read WQCR…ILGH, HSCP…LLTH, and HKCQ…MLLH. Residue Lys-379 forms a Glycyl lysine isopeptide (Lys-Gly) (interchain with G-Cter in SUMO2) linkage. 8 consecutive C2H2-type zinc fingers follow at residues 381-403, 409-431, 437-459, 465-487, 493-515, 521-543, 549-571, and 577-600; these read YSCH…EVKH, HVCV…LASH, YQCL…MLKH, FVCT…SLTH, FKCE…MLIH, YQCH…MIVH, FKCK…MHLH, and FKCP…KVKH.

It belongs to the krueppel C2H2-type zinc-finger protein family.

The protein resides in the nucleus. In terms of biological role, may be involved in transcriptional regulation. The protein is Zinc finger protein 710 (Znf710) of Mus musculus (Mouse).